We begin with the raw amino-acid sequence, 563 residues long: Tripeptidyl-peptidase 1 (563 aa).

An N-terminal signal peptide occupies residues 1-19 (MGPRSGLLGLFALFVAGKC). Residues 20 to 195 (SYSPEPDQQR…PEPQVPGTVG (176 aa)) constitute a propeptide, removed in mature form. Cys111 and Cys122 are joined by a disulfide. The Peptidase S53 domain maps to 199–563 (GVTPSVIRKR…PALLKTLMNP (365 aa)). Residues Asn210 and Asn222 are each glycosylated (N-linked (GlcNAc...) asparagine). Active-site charge relay system residues include Glu272 and Asp276. 3 N-linked (GlcNAc...) asparagine glycosylation sites follow: Asn286, Asn313, and Asn443. 2 disulfides stabilise this stretch: Cys365/Cys526 and Cys522/Cys537. Ser475 acts as the Charge relay system in catalysis. Residues Asp517 and Val518 each contribute to the Ca(2+) site. Ca(2+) contacts are provided by Gly539, Gly541, and Asp543.

Monomer. Interacts with CLN5. Interacts with CLN3. The cofactor is Ca(2+). Post-translationally, activated by autocatalytic proteolytical processing upon acidification. N-glycosylation is required for processing and activity.

It localises to the lysosome. Its subcellular location is the melanosome. It catalyses the reaction Release of an N-terminal tripeptide from a polypeptide, but also has endopeptidase activity.. Its function is as follows. Lysosomal serine protease with tripeptidyl-peptidase I activity. May act as a non-specific lysosomal peptidase which generates tripeptides from the breakdown products produced by lysosomal proteinases. Requires substrates with an unsubstituted N-terminus. The sequence is that of Tripeptidyl-peptidase 1 (TPP1) from Bos taurus (Bovine).